The sequence spans 1534 residues: Activating signal cointegrator 1 complex subunit 3 (1534 aa).

In terms of domain architecture, Helicase ATP-binding 1 spans 83 to 267 (ETAYNTNENL…FLHVNPFIGL (185 aa)). 96 to 103 (APTGAGKT) is a binding site for ATP. The short motif at 209-212 (DEVH) is the DEVH box element. One can recognise a Helicase C-terminal 1 domain in the interval 294–500 (QLHDMEEVCY…SLADNLNAEI (207 aa)). The SEC63 1 domain occupies 576-849 (STDLGRTASH…GSEAVCIINF (274 aa)). The 176-residue stretch at 898–1073 (HTLYHTDTNV…WLGIGQVGLF (176 aa)) folds into the Helicase ATP-binding 2 domain. 911-918 (APTGSGKT) is an ATP binding site. The DEIH box motif lies at 1015–1018 (DEIH). The Helicase C-terminal 2 domain occupies 1106 to 1313 (PVFQAIRTHS…GTVTSKQDAM (208 aa)). Positions 1374–1481 (PLTYGRISSY…TLPHIQKQEL (108 aa)) constitute an SEC63 2 domain.

This sequence belongs to the helicase family.

Its subcellular location is the nucleus. The protein localises to the nucleus speckle. It is found in the cytoplasm. The protein resides in the cytosol. The enzyme catalyses Couples ATP hydrolysis with the unwinding of duplex DNA by translocating in the 3'-5' direction.. It catalyses the reaction ATP + H2O = ADP + phosphate + H(+). In terms of biological role, 3'-5' DNA helicase involved in repair of alkylated DNA. Promotes DNA unwinding to generate single-stranded substrate needed for alkbh3, enabling alkbh3 to process alkylated N3-methylcytosine (3mC) within double-stranded regions. Also involved in activation of the ribosome quality control (RQC) pathway, a pathway that degrades nascent peptide chains during problematic translation. Drives the splitting of stalled ribosomes. This Danio rerio (Zebrafish) protein is Activating signal cointegrator 1 complex subunit 3 (ascc3).